Here is a 268-residue protein sequence, read N- to C-terminus: MERYENLFAQLNDRREGAFVPFVTLGDPGIEQSLKIIDTLIDSGADALELGVPFSDPLADGPTIQNANLRAFAAGVTPAQCFEMLALIREKHPTIPIGLLMYANLVFNNGIDAFYARCEQVGVDSVLVADVPVEESAPFRQAALRHNIAPIFICPPNADDDLLRQVASYGRGYTYLLSRSGVTGAENRGALPLHHLIEKLKEYHAAPALQGFGISSPEQVSAAVRAGAAGAISGSAIVKIIEKNLASPEQMLAELRSFVSAMKAASRA.

Residues Glu49 and Asp60 each act as proton acceptor in the active site.

The protein belongs to the TrpA family. Tetramer of two alpha and two beta chains.

It catalyses the reaction (1S,2R)-1-C-(indol-3-yl)glycerol 3-phosphate + L-serine = D-glyceraldehyde 3-phosphate + L-tryptophan + H2O. It participates in amino-acid biosynthesis; L-tryptophan biosynthesis; L-tryptophan from chorismate: step 5/5. The alpha subunit is responsible for the aldol cleavage of indoleglycerol phosphate to indole and glyceraldehyde 3-phosphate. The chain is Tryptophan synthase alpha chain from Salmonella choleraesuis (strain SC-B67).